Reading from the N-terminus, the 284-residue chain is F-box protein PP2-B13 (284 aa).

Positions Met1–Phe44 constitute an F-box domain.

The polypeptide is F-box protein PP2-B13 (PP2B13) (Arabidopsis thaliana (Mouse-ear cress)).